The sequence spans 199 residues: Phosphatidylethanolamine N-methyltransferase (199 aa).

At 1–12 (MSWLLGYMDPTE) the chain is on the lumenal side. The helical intramembrane region spans 13-33 (PSFVAAVITIVFNPLFWNVVA). The Lumenal segment spans residues 34–45 (RWEQRTRKLSRA). The helical transmembrane segment at 46 to 66 (FGSPHLACYSLGICILLLNIL) threads the bilayer. Residues 67–93 (RSHCFTQAMMSQPKMEGLDNHTTYFLG) lie on the Cytoplasmic side of the membrane. The helical transmembrane segment at 94–114 (LAFLGWGFVFVLSSFYALGFT) threads the bilayer. Residue 98-100 (GWG) participates in S-adenosyl-L-methionine binding. At 115-157 (GTFLGDYFGILKESRVTTFPFSVLDNPMYWGSTANYLGWALMH) the chain is on the lumenal side. A helical membrane pass occupies residues 158–178 (ASPTGLLLTVLVAIVYVVALL). Topologically, residues 179-199 (YEEPFTAEIYRQKATRLHKRS) are cytoplasmic. 180-181 (EE) contributes to the S-adenosyl-L-methionine binding site.

The protein belongs to the class VI-like SAM-binding methyltransferase superfamily. PEMT/PEM2 methyltransferase family. As to expression, expressed in liver (at protein level).

It is found in the endoplasmic reticulum membrane. The protein resides in the mitochondrion membrane. The enzyme catalyses a 1,2-diacyl-sn-glycero-3-phospho-N-methylethanolamine + S-adenosyl-L-methionine = a 1,2-diacyl-sn-glycero-3-phospho-N,N-dimethylethanolamine + S-adenosyl-L-homocysteine + H(+). The catalysed reaction is a 1,2-diacyl-sn-glycero-3-phospho-N,N-dimethylethanolamine + S-adenosyl-L-methionine = a 1,2-diacyl-sn-glycero-3-phosphocholine + S-adenosyl-L-homocysteine + H(+). It carries out the reaction a 1,2-diacyl-sn-glycero-3-phosphoethanolamine + S-adenosyl-L-methionine = a 1,2-diacyl-sn-glycero-3-phospho-N-methylethanolamine + S-adenosyl-L-homocysteine + H(+). It catalyses the reaction 1,2-di-(9Z-octadecenoyl)-sn-glycero-3-phosphoethanolamine + S-adenosyl-L-methionine = 1,2-di-(9Z-octadecenoyl)-sn-glycero-3-phospho-N-methylethanolamine + S-adenosyl-L-homocysteine + H(+). The enzyme catalyses 1,2-di-(9Z-octadecenoyl)-sn-glycero-3-phospho-N-methylethanolamine + S-adenosyl-L-methionine = 1,2-di-(9Z-octadecenoyl)-sn-glycero-3-phospho-N,N-dimethylethanolamine + S-adenosyl-L-homocysteine + H(+). The catalysed reaction is 1,2-di-(9Z-octadecenoyl)-sn-glycero-3-phospho-N,N-dimethylethanolamine + S-adenosyl-L-methionine = 1,2-di-(9Z-octadecenoyl)-sn-glycero-3-phosphocholine + S-adenosyl-L-homocysteine + H(+). It carries out the reaction 1,2-di-(9Z,12Z-octadecadienoyl)-sn-glycero-3-phosphoethanolamine + S-adenosyl-L-methionine = 1,2-di-(9Z,12Z-octadecadienoyl)-sn-glycero-3-phospho-N-methylethanolamine + S-adenosyl-L-homocysteine + H(+). It catalyses the reaction 1,2-di-(9Z,12Z-octadecadienoyl)-sn-glycero-3-phospho-N-methylethanolamine + S-adenosyl-L-methionine = 1,2-di-(9Z,12Z-octadecadienoyl)-sn-glycero-3-phospho-N,N-dimethylethanolamine + S-adenosyl-L-homocysteine + H(+). The enzyme catalyses 1,2-di-(9Z,12Z-octadecadienoyl)-sn-glycero-3-phospho-N,N-dimethylethanolamine + S-adenosyl-L-methionine = 1,2-di-(9Z,12Z-octadecadienoyl)-sn-glycero-3-phosphocholine + S-adenosyl-L-homocysteine + H(+). The catalysed reaction is 1,2-di-(9Z,12Z,15Z-octadecatrienoyl)-sn-glycero-3-phosphoethanolamine + S-adenosyl-L-methionine = 1,2-di-(9Z,12Z,15Z-octadecatrienoyl)-sn-glycero-3-phospho-N-methylethanolamine + S-adenosyl-L-homocysteine + H(+). It carries out the reaction 1,2-di-(9Z,12Z,15Z-octadecatrienoyl)-sn-glycero-3-phospho-N-methylethanolamine + S-adenosyl-L-methionine = 1,2-di-(9Z,12Z,15Z-octadecatrienoyl)-sn-glycero-3-phospho-N,N-dimethylethanolamine + S-adenosyl-L-homocysteine + H(+). It catalyses the reaction 1,2-di-(9Z,12Z,15Z-octadecatrienoyl)-sn-glycero-3-phospho-N,N-dimethylethanolamine + S-adenosyl-L-methionine = 1,2-di-(9Z,12Z,15Z-octadecatrienoyl)-sn-glycero-3-phosphocholine + S-adenosyl-L-homocysteine + H(+). The enzyme catalyses 1-hexadecanoyl-2-(4Z,7Z,10Z,13Z,16Z,19Z-docosahexaenoyl)-sn-glycero-3-phosphoethanolamine + S-adenosyl-L-methionine = 1-hexadecanoyl-2-(4Z,7Z,10Z,13Z,16Z,19Z-docosahexaenoyl)-sn-glycero-3-phospho-N-methylethanolamine + S-adenosyl-L-homocysteine + H(+). The catalysed reaction is 1-hexadecanoyl-2-(4Z,7Z,10Z,13Z,16Z,19Z-docosahexaenoyl)-sn-glycero-3-phospho-N-methylethanolamine + S-adenosyl-L-methionine = 1-hexadecanoyl-2-(4Z,7Z,10Z,13Z,16Z,19Z-docosahexaenoyl)-sn-glycero-3-phospho-N,N-dimethylethanolamine + S-adenosyl-L-homocysteine + H(+). It carries out the reaction 1-hexadecanoyl-2-(4Z,7Z,10Z,13Z,16Z,19Z-docosahexaenoyl)-sn-glycero-3-phospho-N,N-dimethylethanolamine + S-adenosyl-L-methionine = 1-hexadecanoyl-2-(4Z,7Z,10Z,13Z,16Z,19Z-docosahexaenoyl)-sn-glycero-3-phosphocholine + S-adenosyl-L-homocysteine + H(+). It functions in the pathway phospholipid metabolism; phosphatidylcholine biosynthesis. Functionally, catalyzes the three sequential steps of the methylation pathway for the biosynthesis of phosphatidylcholine, a critical and essential component for membrane structure. Uses S-adenosylmethionine (S-adenosyl-L-methionine, SAM or AdoMet) as the methyl group donor for the methylation of phosphatidylethanolamine (1,2-diacyl-sn-glycero-3-phosphoethanolamine, PE) to phosphatidylmonomethylethanolamine (1,2-diacyl-sn-glycero-3-phospho-N-methylethanolamine, PMME), PMME to phosphatidyldimethylethanolamine (1,2-diacyl-sn-glycero-3-phospho-N,N-dimethylethanolamine, PDME), and PDME to phosphatidylcholine (1,2-diacyl-sn-glycero-3-phosphocholine, PC), producing S-adenosyl-L-homocysteine in each step. The protein is Phosphatidylethanolamine N-methyltransferase of Mus musculus (Mouse).